A 106-amino-acid polypeptide reads, in one-letter code: UPF0060 membrane protein Bxeno_B1021 (106 aa).

4 consecutive transmembrane segments (helical) span residues 2-22, 30-50, 58-78, and 82-102; these read KTFLLYAVTAVAEIVGCYLPW, SIWLLVPGALSLALFAWLLTL, VYAAYGGVYVAVAIAWLWCVD, and PTLWDAAGVVFTLAGMAIIAF.

It belongs to the UPF0060 family.

The protein resides in the cell inner membrane. This chain is UPF0060 membrane protein Bxeno_B1021, found in Paraburkholderia xenovorans (strain LB400).